The primary structure comprises 215 residues: Kunitz trypsin inhibitor 4 (215 aa).

The first 28 residues, 1 to 28 (MTKTTKTMNPKFYLVLALTAVLASNAYG), serve as a signal peptide directing secretion. Intrachain disulfides connect Cys66-Cys112 and Cys165-Cys176. N-linked (GlcNAc...) asparagine glycosylation is present at Asn206.

Belongs to the protease inhibitor I3 (leguminous Kunitz-type inhibitor) family. In terms of tissue distribution, expressed in roots.

The protein localises to the endoplasmic reticulum. Exhibits Kunitz trypsin protease inhibitor activity. Involved in modulating programmed cell death (PCD) in plant-pathogen interactions. Can inhibit both serine proteases and cysteine proteases. May be involved in the modulation of the proteases that participate in the hydrolysis of dietary proteins in the gut of spider mites. This is Kunitz trypsin inhibitor 4 from Arabidopsis thaliana (Mouse-ear cress).